The chain runs to 178 residues: Protein GrpE (178 aa).

Residues 1–11 (MAEDQAPREET) show a composition bias toward basic and acidic residues. Residues 1–30 (MAEDQAPREETVEAPELTEAPEIDELETLR) are disordered.

It belongs to the GrpE family. Homodimer.

The protein resides in the cytoplasm. Participates actively in the response to hyperosmotic and heat shock by preventing the aggregation of stress-denatured proteins, in association with DnaK and GrpE. It is the nucleotide exchange factor for DnaK and may function as a thermosensor. Unfolded proteins bind initially to DnaJ; upon interaction with the DnaJ-bound protein, DnaK hydrolyzes its bound ATP, resulting in the formation of a stable complex. GrpE releases ADP from DnaK; ATP binding to DnaK triggers the release of the substrate protein, thus completing the reaction cycle. Several rounds of ATP-dependent interactions between DnaJ, DnaK and GrpE are required for fully efficient folding. The polypeptide is Protein GrpE (Cereibacter sphaeroides (strain ATCC 17023 / DSM 158 / JCM 6121 / CCUG 31486 / LMG 2827 / NBRC 12203 / NCIMB 8253 / ATH 2.4.1.) (Rhodobacter sphaeroides)).